The chain runs to 518 residues: 2-isopropylmalate synthase (518 aa).

In terms of domain architecture, Pyruvate carboxyltransferase spans 5-267 (VIIFDTTLRD…STNIKHKEIY (263 aa)). Residues Asp-14, His-202, His-204, and Asn-238 each coordinate Mn(2+). The tract at residues 392–518 (SLSFFSVQSI…KLKTLKKVNN (127 aa)) is regulatory domain.

This sequence belongs to the alpha-IPM synthase/homocitrate synthase family. LeuA type 1 subfamily. Homodimer. The cofactor is Mn(2+).

It localises to the cytoplasm. The enzyme catalyses 3-methyl-2-oxobutanoate + acetyl-CoA + H2O = (2S)-2-isopropylmalate + CoA + H(+). It participates in amino-acid biosynthesis; L-leucine biosynthesis; L-leucine from 3-methyl-2-oxobutanoate: step 1/4. Its function is as follows. Catalyzes the condensation of the acetyl group of acetyl-CoA with 3-methyl-2-oxobutanoate (2-ketoisovalerate) to form 3-carboxy-3-hydroxy-4-methylpentanoate (2-isopropylmalate). The polypeptide is 2-isopropylmalate synthase (Buchnera aphidicola subsp. Schizaphis graminum (strain Sg)).